Reading from the N-terminus, the 195-residue chain is UPF0316 protein Pcar_2434 (195 aa).

A run of 3 helical transmembrane segments spans residues 13-33 (LFLL…IGTL), 45-65 (WAGV…SQVM), and 71-91 (VWTY…GVLI).

This sequence belongs to the UPF0316 family.

Its subcellular location is the cell membrane. The sequence is that of UPF0316 protein Pcar_2434 from Syntrophotalea carbinolica (strain DSM 2380 / NBRC 103641 / GraBd1) (Pelobacter carbinolicus).